A 182-amino-acid chain; its full sequence is NAD(P)H-quinone oxidoreductase subunit I, chloroplastic (182 aa).

4Fe-4S ferredoxin-type domains follow at residues 55-84 (GRIH…VDWK) and 95-124 (LNYS…MTEE). [4Fe-4S] cluster is bound by residues Cys-64, Cys-67, Cys-70, Cys-74, Cys-104, Cys-107, Cys-110, and Cys-114.

It belongs to the complex I 23 kDa subunit family. As to quaternary structure, NDH is composed of at least 16 different subunits, 5 of which are encoded in the nucleus. It depends on [4Fe-4S] cluster as a cofactor.

Its subcellular location is the plastid. It is found in the chloroplast thylakoid membrane. It catalyses the reaction a plastoquinone + NADH + (n+1) H(+)(in) = a plastoquinol + NAD(+) + n H(+)(out). It carries out the reaction a plastoquinone + NADPH + (n+1) H(+)(in) = a plastoquinol + NADP(+) + n H(+)(out). Its function is as follows. NDH shuttles electrons from NAD(P)H:plastoquinone, via FMN and iron-sulfur (Fe-S) centers, to quinones in the photosynthetic chain and possibly in a chloroplast respiratory chain. The immediate electron acceptor for the enzyme in this species is believed to be plastoquinone. Couples the redox reaction to proton translocation, and thus conserves the redox energy in a proton gradient. This Buxus microphylla (Littleleaf boxwood) protein is NAD(P)H-quinone oxidoreductase subunit I, chloroplastic.